The following is a 469-amino-acid chain: Glutamine synthetase (469 aa).

The GS beta-grasp domain maps to 14–98 (NDVKYVDLRF…VVCDVLEPTT (85 aa)). The GS catalytic domain occupies 106–469 (PRGIAKKAMA…PVEFEMYYSV (364 aa)). Residues Glu-131 and Glu-133 each contribute to the Mg(2+) site. Residue Glu-209 coordinates ATP. Glu-214 and Glu-221 together coordinate Mg(2+). Residues 265 to 266 (NG) and Gly-266 contribute to the L-glutamate site. His-270 provides a ligand contact to Mg(2+). ATP contacts are provided by residues 272-274 (HQS) and Ser-274. L-glutamate contacts are provided by Arg-322, Glu-328, and Arg-340. ATP is bound by residues Arg-340, Arg-345, and Lys-353. Residue Glu-358 participates in Mg(2+) binding. Arg-360 lines the L-glutamate pocket. Tyr-398 is modified (O-AMP-tyrosine).

This sequence belongs to the glutamine synthetase family. Oligomer of 12 subunits arranged in the form of two hexameric ring. Requires Mg(2+) as cofactor.

Its subcellular location is the cytoplasm. The catalysed reaction is L-glutamate + NH4(+) + ATP = L-glutamine + ADP + phosphate + H(+). The activity of this enzyme could be controlled by adenylation under conditions of abundant glutamine. Functionally, catalyzes the ATP-dependent biosynthesis of glutamine from glutamate and ammonia. This Azorhizobium caulinodans (strain ATCC 43989 / DSM 5975 / JCM 20966 / LMG 6465 / NBRC 14845 / NCIMB 13405 / ORS 571) protein is Glutamine synthetase.